The following is a 297-amino-acid chain: Vacuolar protein sorting-associated protein 26C (297 aa).

This sequence belongs to the VPS26 family. Component of the commander complex that is essential for endosomal recycling of transmembrane cargos; the commander complex is composed of the CCC subcomplex and the retriever subcomplex. Component of the heterotrimeric retriever complex consisting of VPS26C, VPS29 and VPS35L; within the complex interacts with VPS35L. Interacts with SNX17 (via C-terminus); the interaction is direct and associates SNX17 with the retriever complex. Interacts with SNX31; the interaction is direct.

The protein resides in the endosome. Functionally, component of the commander complex that is essential for endosomal recycling of transmembrane cargos; the commander complex is composed of the CCC subcomplex and the retriever subcomplex. Component of the retriever complex, which is a heterotrimeric complex related to retromer cargo-selective complex (CSC) and essential for retromer-independent retrieval and recycling of numerous cargos such as integrin alpha-5/beta-1 (ITGA5:ITGB1). The recruitment of the retriever complex to the endosomal membrane involves CCC and WASH complexes. In the endosomes, drives the retriever and recycling of NxxY-motif-containing cargo proteins by coupling to SNX17, a cargo essential for the homeostatic maintenance of numerous cell surface proteins associated with processes that include cell migration, cell adhesion, nutrient supply and cell signaling. The sequence is that of Vacuolar protein sorting-associated protein 26C from Mus musculus (Mouse).